The primary structure comprises 446 residues: Tubulin beta-2 chain (446 aa).

8 residues coordinate GTP: Gln-11, Glu-69, Ser-138, Gly-142, Thr-143, Gly-144, Asn-204, and Asn-226. Position 69 (Glu-69) interacts with Mg(2+).

Belongs to the tubulin family. Dimer of alpha and beta chains. A typical microtubule is a hollow water-filled tube with an outer diameter of 25 nm and an inner diameter of 15 nM. Alpha-beta heterodimers associate head-to-tail to form protofilaments running lengthwise along the microtubule wall with the beta-tubulin subunit facing the microtubule plus end conferring a structural polarity. Microtubules usually have 13 protofilaments but different protofilament numbers can be found in some organisms and specialized cells. Mg(2+) serves as cofactor.

Its subcellular location is the cytoplasm. It is found in the cytoskeleton. In terms of biological role, tubulin is the major constituent of microtubules, a cylinder consisting of laterally associated linear protofilaments composed of alpha- and beta-tubulin heterodimers. Microtubules grow by the addition of GTP-tubulin dimers to the microtubule end, where a stabilizing cap forms. Below the cap, tubulin dimers are in GDP-bound state, owing to GTPase activity of alpha-tubulin. The chain is Tubulin beta-2 chain (tub2) from Hypocrea rufa (Trichoderma viride).